Here is a 70-residue protein sequence, read N- to C-terminus: MKLTCVLIIAVLFLTACQLTTGEQKDHALRSTDKNSKLTRQCTPVGGYCSRHHHCCSNHCIKSIGRCVAH.

A signal peptide spans 1–22 (MKLTCVLIIAVLFLTACQLTTG). Residues 23 to 40 (EQKDHALRSTDKNSKLTR) constitute a propeptide that is removed on maturation. Gln-41 is modified (pyrrolidone carboxylic acid). 3 cysteine pairs are disulfide-bonded: Cys-42-Cys-56, Cys-49-Cys-60, and Cys-55-Cys-67.

The protein belongs to the conotoxin O1 superfamily. Expressed by the venom duct.

It localises to the secreted. In Conus arenatus (Sand-dusted cone), this protein is Conotoxin ArMKLT2-0111.